The primary structure comprises 165 residues: Crossover junction endodeoxyribonuclease RuvC (165 aa).

Residues D7, E68, and H142 contribute to the active site. Positions 7, 68, and 142 each coordinate Mg(2+).

It belongs to the RuvC family. In terms of assembly, homodimer which binds Holliday junction (HJ) DNA. The HJ becomes 2-fold symmetrical on binding to RuvC with unstacked arms; it has a different conformation from HJ DNA in complex with RuvA. In the full resolvosome a probable DNA-RuvA(4)-RuvB(12)-RuvC(2) complex forms which resolves the HJ. It depends on Mg(2+) as a cofactor.

Its subcellular location is the cytoplasm. It carries out the reaction Endonucleolytic cleavage at a junction such as a reciprocal single-stranded crossover between two homologous DNA duplexes (Holliday junction).. In terms of biological role, the RuvA-RuvB-RuvC complex processes Holliday junction (HJ) DNA during genetic recombination and DNA repair. Endonuclease that resolves HJ intermediates. Cleaves cruciform DNA by making single-stranded nicks across the HJ at symmetrical positions within the homologous arms, yielding a 5'-phosphate and a 3'-hydroxyl group; requires a central core of homology in the junction. The consensus cleavage sequence is 5'-(A/T)TT(C/G)-3'. Cleavage occurs on the 3'-side of the TT dinucleotide at the point of strand exchange. HJ branch migration catalyzed by RuvA-RuvB allows RuvC to scan DNA until it finds its consensus sequence, where it cleaves and resolves the cruciform DNA. The protein is Crossover junction endodeoxyribonuclease RuvC of Anaplasma marginale (strain Florida).